Consider the following 487-residue polypeptide: UDP-N-acetylmuramate--L-alanine ligase (487 aa).

124-130 (GTHGKTT) serves as a coordination point for ATP.

The protein belongs to the MurCDEF family.

The protein resides in the cytoplasm. The enzyme catalyses UDP-N-acetyl-alpha-D-muramate + L-alanine + ATP = UDP-N-acetyl-alpha-D-muramoyl-L-alanine + ADP + phosphate + H(+). It functions in the pathway cell wall biogenesis; peptidoglycan biosynthesis. Its function is as follows. Cell wall formation. This chain is UDP-N-acetylmuramate--L-alanine ligase, found in Acaryochloris marina (strain MBIC 11017).